Here is a 258-residue protein sequence, read N- to C-terminus: UPF0758 protein Bamb_2548 (258 aa).

The interval 1–43 (MLSPCLAAPATECRDPADAPAAPARHTGPARPRKRRPRNWKPH) is disordered. Residues 31 to 43 (RPRKRRPRNWKPH) show a composition bias toward basic residues. One can recognise an MPN domain in the interval 136–258 (QIDSPGAVED…TFSFARAGWL (123 aa)). Zn(2+) is bound by residues His207, His209, and Asp220. The JAMM motif motif lies at 207–220 (HNHPSGAVQPSAED).

The protein belongs to the UPF0758 family.

This Burkholderia ambifaria (strain ATCC BAA-244 / DSM 16087 / CCUG 44356 / LMG 19182 / AMMD) (Burkholderia cepacia (strain AMMD)) protein is UPF0758 protein Bamb_2548.